Here is a 430-residue protein sequence, read N- to C-terminus: Dihydrolipoyllysine-residue acetyltransferase component of pyruvate dehydrogenase complex (430 aa).

The Lipoyl-binding domain occupies 2–77 (AFEFRLPDIG…VVGDVIVKID (76 aa)). Lys43 is modified (N6-lipoyllysine). The interval 80–122 (DAEDMQFKGHDDDSSSKEEPAKEEAPAEQAPVATQTEEVDENR) is disordered. Residues 84–104 (MQFKGHDDDSSSKEEPAKEEA) are compositionally biased toward basic and acidic residues. The 38-residue stretch at 125-162 (KAMPSVRKYAREKGVNIKAVSGSGKNGRITKEDVDAYL) folds into the Peripheral subunit-binding (PSBD) domain. Residues 164 to 200 (GGAPTASNESADSATNEEVAETPAAPAAVSLEGDFPE) are disordered. The segment covering 177–192 (ATNEEVAETPAAPAAV) has biased composition (low complexity). Residue His401 is part of the active site.

Belongs to the 2-oxoacid dehydrogenase family. Forms a 24-polypeptide structural core with octahedral symmetry. It depends on (R)-lipoate as a cofactor.

The catalysed reaction is N(6)-[(R)-dihydrolipoyl]-L-lysyl-[protein] + acetyl-CoA = N(6)-[(R)-S(8)-acetyldihydrolipoyl]-L-lysyl-[protein] + CoA. Its function is as follows. The pyruvate dehydrogenase complex catalyzes the overall conversion of pyruvate to acetyl-CoA and CO(2). It contains multiple copies of three enzymatic components: pyruvate dehydrogenase (E1), dihydrolipoamide acetyltransferase (E2) and lipoamide dehydrogenase (E3). The protein is Dihydrolipoyllysine-residue acetyltransferase component of pyruvate dehydrogenase complex (pdhC) of Staphylococcus aureus.